The sequence spans 669 residues: Protein BNIP5 (669 aa).

4 disordered regions span residues 1–116, 131–259, 273–401, and 413–544; these read MPRS…REAQ, IEEP…QDDV, QLEE…RASE, and LQSA…SPER. Basic and acidic residues predominate over residues 34–47; that stretch reads RSLDRQVPRKKDPE. Residues 48-73 show a composition bias toward polar residues; it reads SSNTRCPSSATCRRTASDGARSSESP. 2 stretches are compositionally biased toward basic and acidic residues: residues 104-113 and 131-148; these read EDTKKERLPR and IEEP…KGDL. Residues 158–175 are compositionally biased toward basic residues; it reads RKKSHEKRTSRKKHSHRK. Residues 285–295 are compositionally biased toward pro residues; it reads EAVPPRKPTPL. A Glycyl lysine isopeptide (Lys-Gly) (interchain with G-Cter in SUMO2) cross-link involves residue Lys-314. Residues 346–357 show a composition bias toward polar residues; that stretch reads VSSQRASTSSSL. A compositionally biased stretch (basic and acidic residues) spans 390–401; that stretch reads PEEKPLLDRASE. The segment covering 445-462 has biased composition (basic residues); sequence SQVKKSNLRRAFSLRKHS. Residues 516 to 528 are compositionally biased toward low complexity; that stretch reads AAGGAPAGSPGAP.

The polypeptide is Protein BNIP5 (Bnip5) (Mus musculus (Mouse)).